The following is a 279-amino-acid chain: MTTRIDTKFAELKAEGRPALVTYFMGGDPDLETALKVMKALPKAGADVIELGMPFSDPMADGPAIQAAGLRALNAGQTLAKTLYMAAEFRKEDDTTPIVMMGYYNPIYVYGVERFLTDAKASGVDGLIVVDLPSEMDAELCIPAMKAGINFIRLTTPTTDDKRLPKVLHNSSGFVYYVSMNGITGAAIADTAKVGEAVRHIKKSTDLPICVGFGVKTPEQAAAIATHADGVVVGTAIVNAIAGELDEKGKVKGDPVAAATRLVHALAESVRATRLEAAQ.

Catalysis depends on proton acceptor residues E50 and D61.

It belongs to the TrpA family. Tetramer of two alpha and two beta chains.

It catalyses the reaction (1S,2R)-1-C-(indol-3-yl)glycerol 3-phosphate + L-serine = D-glyceraldehyde 3-phosphate + L-tryptophan + H2O. Its pathway is amino-acid biosynthesis; L-tryptophan biosynthesis; L-tryptophan from chorismate: step 5/5. Its function is as follows. The alpha subunit is responsible for the aldol cleavage of indoleglycerol phosphate to indole and glyceraldehyde 3-phosphate. This Brucella suis biovar 1 (strain 1330) protein is Tryptophan synthase alpha chain.